Here is a 396-residue protein sequence, read N- to C-terminus: MVVFSKVTASLACFSAVVSAAAVPVKSPRQGFSVNQVQKTVTGTRTVNLPGVYANALAKYGATVPANVHAAAVSGSAITTPEENDVEYLTPVKIGESTLNLDFDTGSADLWVFSTELSSAEQSGHDVYDVSSSGKKLTGASWSISYGDGSGASGDVYKDTVTVGGVKATGQAVEAAKKISQQFVQDKSNDGLLGLAFSSINTVSPKPQTTFFDTVKSDLDKPLFAVTLKHGAPGTYDFGYIDKKKFTGSLTYTDVDNSQGFWSFTADSYKVGTGSAGPSIEGIADTGTTLLLLDDGVVSDYYKKVDGAKNNYSAGGYVFPCDADLPDFTVTIGSYDAVVPGKHIKYAPVTTGSSSCFGGIQSNSGIGFSIFGDIFLKSQYVVFDAEGPRLGFAAQA.

Residues 1 to 20 (MVVFSKVTASLACFSAVVSA) form the signal peptide. Residues 21–72 (AAVPVKSPRQGFSVNQVQKTVTGTRTVNLPGVYANALAKYGATVPANVHAAA) constitute a propeptide, activation peptide. The Peptidase A1 domain maps to 88 to 393 (YLTPVKIGES…DAEGPRLGFA (306 aa)). Catalysis depends on residues Asp104 and Asp285. Asn311 carries N-linked (GlcNAc...) asparagine glycosylation. Cys321 and Cys356 are joined by a disulfide.

This sequence belongs to the peptidase A1 family. As to quaternary structure, monomer.

The protein resides in the secreted. The catalysed reaction is Hydrolysis of proteins with broad specificity similar to that of pepsin A, preferring hydrophobic residues at P1 and P1', but also cleaving 20-Gly-|-Glu-21 in the B chain of insulin. Clots milk, and activates trypsinogen.. Its function is as follows. Secreted aspartic endopeptidase that allows assimilation of proteinaceous substrates. The scissile peptide bond is attacked by a nucleophilic water molecule activated by two aspartic residues in the active site. Shows a broad primary substrate specificity. Favors hydrophobic residues at the P1 and P1' positions, but can also activate trypsinogen and hydrolyze the B chain of insulin between positions 'Gly-20' and 'Glu-21'. This Penicillium rubens (strain ATCC 28089 / DSM 1075 / NRRL 1951 / Wisconsin 54-1255) (Penicillium chrysogenum) protein is Penicillopepsin-1 (pepA).